The chain runs to 729 residues: Catalase-peroxidase 1 (729 aa).

Residues 98 to 226 (WHSAGSYRIA…LAAVMMGLIY (129 aa)) constitute a cross-link (tryptophyl-tyrosyl-methioninium (Trp-Tyr) (with M-252)). H99 serves as the catalytic Proton acceptor. Positions 226–252 (YVNPEGVDGNPDPLRTAKDIRETFARM) form a cross-link, tryptophyl-tyrosyl-methioninium (Tyr-Met) (with W-98). H267 lines the heme b pocket.

It belongs to the peroxidase family. Peroxidase/catalase subfamily. Homodimer or homotetramer. It depends on heme b as a cofactor. Post-translationally, formation of the three residue Trp-Tyr-Met cross-link is important for the catalase, but not the peroxidase activity of the enzyme.

It catalyses the reaction H2O2 + AH2 = A + 2 H2O. The catalysed reaction is 2 H2O2 = O2 + 2 H2O. In terms of biological role, bifunctional enzyme with both catalase and broad-spectrum peroxidase activity. The polypeptide is Catalase-peroxidase 1 (Cellvibrio japonicus (strain Ueda107) (Pseudomonas fluorescens subsp. cellulosa)).